Reading from the N-terminus, the 87-residue chain is MKAQIFVVVLGLAALSVLCYGSEADESALHEEIFQLLAASDEVPKPQERDCVRFWGKCSQTSDCCPHLACKSKWPRNICVWDGSVGK.

The signal sequence occupies residues 1–24 (MKAQIFVVVLGLAALSVLCYGSEA). Positions 25 to 49 (DESALHEEIFQLLAASDEVPKPQER) are excised as a propeptide. 3 disulfides stabilise this stretch: cysteine 51/cysteine 65, cysteine 58/cysteine 70, and cysteine 64/cysteine 79. A Valine amide modification is found at valine 85.

In terms of tissue distribution, expressed by the venom gland.

The protein resides in the secreted. Its function is as follows. Inhibits P/Q- (Cav2.1/CACNA1A) and N-type (Cav2.2/CACNA1B) voltage-gated calcium channel by modifying voltage-dependent gating. It selectively and reversibly blocks the calcium channels coupled to glutamate release. Also inhibits potassium channels (Kv2.1/KCNB1) with lower affinity. Has also been shown to weakly inhibit Kv11.1/KCNH2/ERG1, Kv1.2/KCNA2, Kv1.3/KCNA3, Nav1.5/SCN5A, Nav1.7/SCN9A and TRPV1. The protein is Omega-theraphotoxin-Gr1a of Grammostola rosea (Chilean rose tarantula).